Here is a 342-residue protein sequence, read N- to C-terminus: S-adenosylmethionine:tRNA ribosyltransferase-isomerase (342 aa).

Belongs to the QueA family. As to quaternary structure, monomer.

It localises to the cytoplasm. The enzyme catalyses 7-aminomethyl-7-carbaguanosine(34) in tRNA + S-adenosyl-L-methionine = epoxyqueuosine(34) in tRNA + adenine + L-methionine + 2 H(+). It participates in tRNA modification; tRNA-queuosine biosynthesis. Transfers and isomerizes the ribose moiety from AdoMet to the 7-aminomethyl group of 7-deazaguanine (preQ1-tRNA) to give epoxyqueuosine (oQ-tRNA). This is S-adenosylmethionine:tRNA ribosyltransferase-isomerase from Listeria monocytogenes serovar 1/2a (strain ATCC BAA-679 / EGD-e).